The following is a 302-amino-acid chain: Protein transport protein SEC13 homolog A (302 aa).

WD repeat units follow at residues 9 to 48, 54 to 95, 101 to 142, 148 to 201, 208 to 251, and 257 to 296; these read GHSDTIHDVVMDYYGKRVATASSDCTIKITGVSNSGGSQH, GHRG…QWTQ, DHKV…GWDT, AHPV…WKMD, KHTD…EQWE, and DFKTPVWRVSWSLTGNLLAVSDGNNNVTVWKESVDGEWEQ.

This sequence belongs to the WD repeat SEC13 family. In terms of assembly, interacts with MAG5, SEC31A and SEC31B.

It localises to the golgi apparatus. It is found in the endoplasmic reticulum. Its function is as follows. Required for protein transport from the endoplasmic reticulum to the Golgi apparatus. The sequence is that of Protein transport protein SEC13 homolog A from Arabidopsis thaliana (Mouse-ear cress).